Reading from the N-terminus, the 133-residue chain is Putative redox protein FMP46, mitochondrial (133 aa).

A mitochondrion-targeting transit peptide spans 1–21 (MSFWKTLQRQPRTISLFTNDI). C97 is a catalytic residue.

It belongs to the FMP46 family.

It is found in the mitochondrion. In terms of biological role, putative mitochondrial redox protein which could be involved in the reduction of small toxic molecules. This is Putative redox protein FMP46, mitochondrial (FMP46) from Saccharomyces cerevisiae (strain ATCC 204508 / S288c) (Baker's yeast).